We begin with the raw amino-acid sequence, 188 residues long: Small ribosomal subunit protein uS7 (188 aa).

The protein belongs to the universal ribosomal protein uS7 family. In terms of assembly, part of the 30S ribosomal subunit.

In terms of biological role, one of the primary rRNA binding proteins, it binds directly to 16S rRNA where it nucleates assembly of the head domain of the 30S subunit. Is located at the subunit interface close to the decoding center. The polypeptide is Small ribosomal subunit protein uS7 (Methanococcus maripaludis (strain DSM 14266 / JCM 13030 / NBRC 101832 / S2 / LL)).